The sequence spans 568 residues: Potassium-transporting ATPase potassium-binding subunit (568 aa).

Helical transmembrane passes span 6-26, 64-84, 135-155, 179-199, 254-274, 285-305, 382-402, 419-439, 459-481, 488-508, and 529-549; these read ILQI…IGGF, TGYA…TYLI, IALA…AIAF, LYIL…QGVI, LANL…TYTF, WALL…VYPA, GLYG…LMVG, MVML…AAGI, VLYG…SANT, LGIA…AAAG, and LFVT…FFPA.

The protein belongs to the KdpA family. The system is composed of three essential subunits: KdpA, KdpB and KdpC.

Its subcellular location is the cell inner membrane. Functionally, part of the high-affinity ATP-driven potassium transport (or Kdp) system, which catalyzes the hydrolysis of ATP coupled with the electrogenic transport of potassium into the cytoplasm. This subunit binds the periplasmic potassium ions and delivers the ions to the membrane domain of KdpB through an intramembrane tunnel. In Solibacter usitatus (strain Ellin6076), this protein is Potassium-transporting ATPase potassium-binding subunit.